Here is a 311-residue protein sequence, read N- to C-terminus: tRNA-cytidine(32) 2-sulfurtransferase (311 aa).

A PP-loop motif motif is present at residues 47 to 52; the sequence is SGGKDS. Residues C122, C125, and C213 each contribute to the [4Fe-4S] cluster site.

The protein belongs to the TtcA family. In terms of assembly, homodimer. Requires Mg(2+) as cofactor. The cofactor is [4Fe-4S] cluster.

Its subcellular location is the cytoplasm. It catalyses the reaction cytidine(32) in tRNA + S-sulfanyl-L-cysteinyl-[cysteine desulfurase] + AH2 + ATP = 2-thiocytidine(32) in tRNA + L-cysteinyl-[cysteine desulfurase] + A + AMP + diphosphate + H(+). The protein operates within tRNA modification. Functionally, catalyzes the ATP-dependent 2-thiolation of cytidine in position 32 of tRNA, to form 2-thiocytidine (s(2)C32). The sulfur atoms are provided by the cysteine/cysteine desulfurase (IscS) system. This Klebsiella pneumoniae (strain 342) protein is tRNA-cytidine(32) 2-sulfurtransferase.